The following is a 75-amino-acid chain: CDC42 small effector protein 1 (75 aa).

Residues C10 and C11 are each lipidated (S-palmitoyl cysteine). Residues 30-43 form the CRIB domain; that stretch reads IGEPTNFVHLTHIG. The disordered stretch occupies residues 45 to 75; that stretch reads GEMADGMQPSGPIKEQMRSKVPHANGRNSLL.

It belongs to the CDC42SE/SPEC family.

The protein localises to the cytoplasm. It is found in the cytoskeleton. The protein resides in the cell membrane. In terms of biological role, probably involved in the organization of the actin cytoskeleton by acting downstream of CDC42, inducing actin filament assembly. In Danio rerio (Zebrafish), this protein is CDC42 small effector protein 1 (cdc42se1).